The following is a 272-amino-acid chain: Shikimate dehydrogenase (NADP(+)) (272 aa).

Shikimate contacts are provided by residues 14-16 and Thr61; that span reads SKS. The Proton acceptor role is filled by Lys65. NADP(+) is bound at residue Glu77. Shikimate contacts are provided by Asn86 and Asp102. Residues 126–130, 149–154, and Met213 each bind NADP(+); these read GAGGA and NRTVSR. Tyr215 is a shikimate binding site. Gly237 contacts NADP(+).

Belongs to the shikimate dehydrogenase family. As to quaternary structure, homodimer.

The enzyme catalyses shikimate + NADP(+) = 3-dehydroshikimate + NADPH + H(+). Its pathway is metabolic intermediate biosynthesis; chorismate biosynthesis; chorismate from D-erythrose 4-phosphate and phosphoenolpyruvate: step 4/7. In terms of biological role, involved in the biosynthesis of the chorismate, which leads to the biosynthesis of aromatic amino acids. Catalyzes the reversible NADPH linked reduction of 3-dehydroshikimate (DHSA) to yield shikimate (SA). In Escherichia coli (strain K12 / MC4100 / BW2952), this protein is Shikimate dehydrogenase (NADP(+)).